The sequence spans 941 residues: Zinc finger protein 507 (941 aa).

At Ser-95 the chain carries Phosphoserine. 2 C2H2-type zinc fingers span residues 122–144 (YQCS…VKQH) and 152–175 (LMCS…VSEH). The segment covering 165 to 177 (QELEAHVVSEHEN) has biased composition (basic and acidic residues). Residues 165-198 (QELEAHVVSEHENSASSQARSSPSGQGATERKSE) are disordered. Low complexity predominate over residues 178-192 (SASSQARSSPSGQGA). A C2H2-type 3 zinc finger spans residues 237 to 259 (YRCLFCSYTCGQQRMLKTHAWKH). Phosphoserine is present on Ser-415. The segment at 455-477 (ELSKGLAPDENAPPGRRRTNSES) is disordered. 5 consecutive C2H2-type zinc fingers follow at residues 630-652 (YRCR…LRVH), 658-680 (YQCP…MINH), 686-709 (HQCK…REQH), 746-768 (YRCD…RRVH), and 774-796 (YRCS…MWKH). Residues 823-856 (GKSRGKPLLTSSEERTGPTTGSPENLVSSSELTS) are disordered. The span at 839–856 (GPTTGSPENLVSSSELTS) shows a compositional bias: polar residues. Residues 899 to 921 (FCCCICGFESTSKESLLDHMKEH) form a C2H2-type 9 zinc finger.

It belongs to the krueppel C2H2-type zinc-finger protein family.

It is found in the nucleus. Its function is as follows. May be involved in transcriptional regulation. This is Zinc finger protein 507 (Znf507) from Mus musculus (Mouse).